The following is a 520-amino-acid chain: Calcium-dependent protein kinase 25 (520 aa).

A lipid anchor (N-myristoyl glycine) is attached at Gly2. A disordered region spans residues 31-87 (PLKPQLQDKPPQPMLMNKDDDKTKLNDTHGDPKLLEGKEKPAQKQTSQGQGGRKCSD). A compositionally biased stretch (basic and acidic residues) spans 47–72 (NKDDDKTKLNDTHGDPKLLEGKEKPA). One can recognise a Protein kinase domain in the interval 132-390 (YNLGSKLGHG…AQQVLCHPWI (259 aa)). ATP contacts are provided by residues 138–146 (LGHGQFGTT) and Lys161. The active-site Proton acceptor is Asp256. Position 296 is a phosphoserine (Ser296). The interval 396–426 (APDTPLDTTVLSRLKKFSATDKLKKMALRVI) is autoinhibitory domain. An EF-hand 1 domain is found at 433–468 (EEIHELRETFKTIDSGKSGRVTYKELKNGLERFNTN). Ca(2+) contacts are provided by Asp446, Ser450, Arg452, Glu457, Asp483, Glu487, Thr489, and Glu494. The 37-residue stretch at 469 to 505 (LDNSDINSLMQIPTDVHLEDTVDYNEFIEAIVRLRQI) folds into the EF-hand 2; degenerate domain.

It belongs to the protein kinase superfamily. Ser/Thr protein kinase family. CDPK subfamily.

It is found in the membrane. The catalysed reaction is L-seryl-[protein] + ATP = O-phospho-L-seryl-[protein] + ADP + H(+). It catalyses the reaction L-threonyl-[protein] + ATP = O-phospho-L-threonyl-[protein] + ADP + H(+). Its activity is regulated as follows. Activated by calcium. Autophosphorylation may play an important role in the regulation of the kinase activity. Functionally, may play a role in signal transduction pathways that involve calcium as a second messenger. The polypeptide is Calcium-dependent protein kinase 25 (CPK25) (Arabidopsis thaliana (Mouse-ear cress)).